Reading from the N-terminus, the 316-residue chain is Apolipoprotein E (316 aa).

The N-terminal stretch at 1 to 18 is a signal peptide; the sequence is MKVLWVAVVVALLAGCQA. 8 repeat units span residues 79–100, 101–122, 123–144, 145–166, 167–188, 189–210, 211–232, and 233–254. Residues 79–254 are 8 X 22 AA approximate tandem repeats; it reads ALMEETMKEV…RLDKIRQQLE (176 aa). Methionine 142 is modified (methionine sulfoxide). At serine 146 the chain carries Phosphoserine; by FAM20C. The interval 157 to 167 is LDL and other lipoprotein receptors binding; sequence HLRKLRKRLLR. 161–164 serves as a coordination point for heparin; that stretch reads LRKR. A lipid-binding and lipoprotein association region spans residues 209 to 289; the sequence is AATLSTLAGQ…SWFEPLVEDM (81 aa). O-linked (GalNAc...) threonine glycosylation occurs at threonine 211. Position 228-235 (228-235) interacts with heparin; sequence RQKLHGRL. The tract at residues 265–316 is homooligomerization; sequence NQMRLQAEAFQARLRSWFEPLVEDMQRQWAGLVEKVQLALRPSPTSPPSENH. The segment at 277–289 is specificity for association with VLDL; it reads RLRSWFEPLVEDM.

The protein belongs to the apolipoprotein A1/A4/E family. In terms of assembly, homotetramer. May interact with ABCA1; functionally associated with ABCA1 in the biogenesis of HDLs. May interact with APP/A4 amyloid-beta peptide; the interaction is extremely stable in vitro but its physiological significance is unclear. May interact with MAPT. May interact with MAP2. In the cerebrospinal fluid, interacts with secreted SORL1. Interacts with PMEL; this allows the loading of PMEL luminal fragment on ILVs to induce fibril nucleation. Post-translationally, APOE exists as multiple glycosylated and sialylated glycoforms within cells and in plasma. The extent of glycosylation and sialylation are tissue and context specific. In terms of processing, glycated in plasma VLDL. Phosphorylated by FAM20C in the extracellular medium.

It localises to the secreted. Its subcellular location is the extracellular space. It is found in the extracellular matrix. The protein resides in the extracellular vesicle. The protein localises to the endosome. It localises to the multivesicular body. Its function is as follows. APOE is an apolipoprotein, a protein associating with lipid particles, that mainly functions in lipoprotein-mediated lipid transport between organs via the plasma and interstitial fluids. APOE is a core component of plasma lipoproteins and is involved in their production, conversion and clearance. Apolipoproteins are amphipathic molecules that interact both with lipids of the lipoprotein particle core and the aqueous environment of the plasma. As such, APOE associates with chylomicrons, chylomicron remnants, very low density lipoproteins (VLDL) and intermediate density lipoproteins (IDL) but shows a preferential binding to high-density lipoproteins (HDL). It also binds a wide range of cellular receptors including the LDL receptor/LDLR and the very low-density lipoprotein receptor/VLDLR that mediate the cellular uptake of the APOE-containing lipoprotein particles. Finally, APOE also has a heparin-binding activity and binds heparan-sulfate proteoglycans on the surface of cells, a property that supports the capture and the receptor-mediated uptake of APOE-containing lipoproteins by cells. The chain is Apolipoprotein E (APOE) from Bos mutus grunniens (Wild yak).